The primary structure comprises 127 residues: Holo-[acyl-carrier-protein] synthase (127 aa).

Mg(2+) contacts are provided by aspartate 9 and glutamate 58.

This sequence belongs to the P-Pant transferase superfamily. AcpS family. Mg(2+) is required as a cofactor.

Its subcellular location is the cytoplasm. The catalysed reaction is apo-[ACP] + CoA = holo-[ACP] + adenosine 3',5'-bisphosphate + H(+). Functionally, transfers the 4'-phosphopantetheine moiety from coenzyme A to a Ser of acyl-carrier-protein. The protein is Holo-[acyl-carrier-protein] synthase of Shewanella sp. (strain MR-4).